The primary structure comprises 255 residues: Hydroxylmethylpyrimidine kinase (255 aa).

Positions 18, 43, and 110 each coordinate pyridoxal 5'-phosphate. Q43 is a binding site for 4-amino-5-hydroxymethyl-2-methylpyrimidine. A disulfide bond links C195 and C207. S208 provides a ligand contact to pyridoxal 5'-phosphate.

The protein belongs to the ThiD family. As to quaternary structure, homodimer. Post-translationally, crystals show a disulfide bond between Cys-195 and Cys-207. This disulfide is possibly an artifact of the purification and crystallization conditions. However, as it is adjacent to the conserved GSGC of the oxyanion hole, this disulfide may help to orient the backbone amides toward the oxanion intermediate.

The catalysed reaction is 4-amino-5-hydroxymethyl-2-methylpyrimidine + ATP = 4-amino-2-methyl-5-(phosphooxymethyl)pyrimidine + ADP + H(+). Its pathway is cofactor biosynthesis; thiamine diphosphate biosynthesis. Its activity is regulated as follows. Inhibited by pyridoxal phosphate at high micromolar concentrations. Catalyzes the phosphorylation of hydroxymethylpyrimidine (HMP) to hydroxymethylpyrimidine phosphate (HMP-P). Unlike other HMPKs, it cannot catalyze the phosphorylation of HMP-P to generate the diphosphate HMP-PP. Shows no activity with pyridoxal, pyridoxamine or pyridoxine. Does not show phosphatase activity. This Acinetobacter baumannii (strain IS-123) protein is Hydroxylmethylpyrimidine kinase.